The sequence spans 71 residues: Protein translocase subunit SecE (71 aa).

Residues 43-63 (VAGAGILAVGAVGFIIYVLLT) form a helical membrane-spanning segment.

This sequence belongs to the SecE/SEC61-gamma family. As to quaternary structure, component of the Sec protein translocase complex. Heterotrimer consisting of SecY (alpha), SecG (beta) and SecE (gamma) subunits. The heterotrimers can form oligomers, although 1 heterotrimer is thought to be able to translocate proteins. Interacts with the ribosome. May interact with SecDF, and other proteins may be involved.

The protein resides in the cell membrane. Essential subunit of the Sec protein translocation channel SecYEG. Clamps together the 2 halves of SecY. May contact the channel plug during translocation. The protein is Protein translocase subunit SecE of Methanosarcina mazei (strain ATCC BAA-159 / DSM 3647 / Goe1 / Go1 / JCM 11833 / OCM 88) (Methanosarcina frisia).